The sequence spans 402 residues: Digeranylgeranylglycerophospholipid reductase (402 aa).

The FAD site is built by Gly-15, Glu-34, Cys-45, Ala-46, Gly-48, Arg-99, Ala-123, Asp-280, Gly-292, and Ile-293.

The protein belongs to the geranylgeranyl reductase family. DGGGPL reductase subfamily. The cofactor is FAD.

The enzyme catalyses a 2,3-bis-O-phytanyl-sn-glycerol 1-phospholipid + 8 oxidized 2[4Fe-4S]-[ferredoxin] = a 2,3-bis-O-(geranylgeranyl)-sn-glycerol 1-phospholipid + 8 reduced 2[4Fe-4S]-[ferredoxin] + 16 H(+). It catalyses the reaction 2,3-bis-O-(phytanyl)-sn-glycerol 1-phosphate + 8 oxidized 2[4Fe-4S]-[ferredoxin] = 2,3-bis-O-(geranylgeranyl)-sn-glycerol 1-phosphate + 8 reduced 2[4Fe-4S]-[ferredoxin] + 16 H(+). It carries out the reaction a 2,3-bis-O-phytanyl-sn-glycerol 1-phospholipid + 8 A = a 2,3-bis-O-(geranylgeranyl)-sn-glycerol 1-phospholipid + 8 AH2. The catalysed reaction is CDP-2,3-bis-O-(geranylgeranyl)-sn-glycerol + 8 AH2 = CDP-2,3-bis-O-(phytanyl)-sn-glycerol + 8 A. The enzyme catalyses archaetidylserine + 8 AH2 = 2,3-bis-O-phytanyl-sn-glycero-3-phospho-L-serine + 8 A. The protein operates within membrane lipid metabolism; glycerophospholipid metabolism. Is involved in the reduction of 2,3-digeranylgeranylglycerophospholipids (unsaturated archaeols) into 2,3-diphytanylglycerophospholipids (saturated archaeols) in the biosynthesis of archaeal membrane lipids. Catalyzes the formation of archaetidic acid (2,3-di-O-phytanyl-sn-glyceryl phosphate) from 2,3-di-O-geranylgeranylglyceryl phosphate (DGGGP) via the hydrogenation of each double bond of the isoprenoid chains. Is also probably able to reduce double bonds of geranyl groups in CDP-2,3-bis-O-(geranylgeranyl)-sn-glycerol and archaetidylserine, thus acting at various stages in the biosynthesis of archaeal membrane lipids. The protein is Digeranylgeranylglycerophospholipid reductase of Methanospirillum hungatei JF-1 (strain ATCC 27890 / DSM 864 / NBRC 100397 / JF-1).